The sequence spans 191 residues: Peptidyl-tRNA hydrolase (191 aa).

Y14 serves as a coordination point for tRNA. The Proton acceptor role is filled by H19. TRNA is bound by residues Y64, N66, and N112.

It belongs to the PTH family. Monomer.

It localises to the cytoplasm. It carries out the reaction an N-acyl-L-alpha-aminoacyl-tRNA + H2O = an N-acyl-L-amino acid + a tRNA + H(+). In terms of biological role, hydrolyzes ribosome-free peptidyl-tRNAs (with 1 or more amino acids incorporated), which drop off the ribosome during protein synthesis, or as a result of ribosome stalling. Functionally, catalyzes the release of premature peptidyl moieties from peptidyl-tRNA molecules trapped in stalled 50S ribosomal subunits, and thus maintains levels of free tRNAs and 50S ribosomes. This Clostridium botulinum (strain Eklund 17B / Type B) protein is Peptidyl-tRNA hydrolase.